The sequence spans 287 residues: Spore wall protein 7 (287 aa).

Positions 1–19 (MIKGLIYLFLFRCLEGRLA) are cleaved as a signal peptide.

It belongs to the SWP7 family. In terms of assembly, interacts with SWP9.

It is found in the cytoplasm. Its subcellular location is the spore wall. It localises to the spore polar tube. In terms of biological role, involved in adherence of spores to the host cell surface and in infection efficiency. This chain is Spore wall protein 7 (SWP7), found in Nosema bombycis (strain CQ1 / CVCC 102059) (Microsporidian parasite).